The following is an 890-amino-acid chain: Chloroquine resistance transporter (890 aa).

2 disordered regions span residues methionine 1–leucine 163 and glycine 280–glycine 300. Over methionine 1–alanine 349 the chain is Cytoplasmic. Residues serine 8 to lysine 19 show a composition bias toward basic residues. 2 stretches are compositionally biased toward low complexity: residues alanine 102–serine 126 and serine 134–serine 156. Residues alanine 350–phenylalanine 372 traverse the membrane as a helical segment. Residues lysine 373–threonine 391 are Vacuolar-facing. Residues valine 392–proline 412 traverse the membrane as a helical segment. Residues glutamine 413 to asparagine 422 lie on the Cytoplasmic side of the membrane. The helical transmembrane segment at phenylalanine 423–histidine 443 threads the bilayer. Topologically, residues threonine 444–threonine 447 are vacuolar. A helical transmembrane segment spans residues threonine 448–leucine 468. Residues arginine 469–arginine 471 are Cytoplasmic-facing. Residues phenylalanine 472–leucine 492 form a helical membrane-spanning segment. Residues proline 493 to aspartate 505 are Vacuolar-facing. Residues valine 506–tyrosine 526 form a helical membrane-spanning segment. Over lysine 527–tryptophan 544 the chain is Cytoplasmic. A helical transmembrane segment spans residues valine 545–leucine 565. At glycine 566 to lysine 614 the chain is on the vacuolar side. Asparagine 581 is a glycosylation site (N-linked (GlcNAc...) asparagine). Cystine bridges form between cysteine 585–cysteine 609 and cysteine 596–cysteine 606. A helical membrane pass occupies residues tyrosine 615–valine 634. The Cytoplasmic segment spans residues lysine 635–alanine 640. The chain crosses the membrane as a helical span at residues leucine 641 to methionine 663. Residues glycine 664–threonine 673 are Vacuolar-facing. Residues aspartate 674–methionine 694 form a helical membrane-spanning segment. Residues lysine 695 to isoleucine 890 lie on the Cytoplasmic side of the membrane. Residues alanine 798–serine 871 form a disordered region.

Belongs to the CRT-like transporter family.

It localises to the vacuole membrane. Its function is as follows. Nutrient transporter. Involved in maintaining the osmotic homeostasis of the digestive vacuole. Required for the proper organization of the endolysosomal system and, in turn, indirectly for microneme secretion and parasite invasion. Required for bradyzoite viability and cyst development. In Toxoplasma gondii, this protein is Chloroquine resistance transporter.